Reading from the N-terminus, the 153-residue chain is Lectin-like protein EP153R (153 aa).

Topologically, residues 1–30 (MYFKKKYIGLIDKNCEKKILDDSSTIKICY) are cytoplasmic. The chain crosses the membrane as a helical span at residues 31 to 51 (ILIGILIGTNMITLIYNFIFW). Over 52-153 (DNYIKCYRNN…YTDLLFICGK (102 aa)) the chain is Extracellular. Cysteine 67 and cysteine 78 are oxidised to a cystine. N-linked (GlcNAc...) asparagine; by host glycosylation is found at asparagine 83, asparagine 89, asparagine 101, asparagine 107, asparagine 113, asparagine 120, asparagine 127, and asparagine 143. Cysteine 97 and cysteine 151 are joined by a disulfide.

The protein belongs to the asfivirus lectin-like protein family. As to quaternary structure, homodimer.

The protein resides in the host endoplasmic reticulum membrane. In terms of biological role, down-regulates MHC-I expression by impairing the appropriate configuration or presentation into the plasma membrane of the latter. Participates in viral hemadsorption, which may help viral spread. Reduces the transactivating activity of host TP53, thus inhibiting apoptosis. Non-essential for virus growth in swine macrophage cell cultures. The protein is Lectin-like protein EP153R of African swine fever virus (strain Badajoz 1971 Vero-adapted) (Ba71V).